The primary structure comprises 346 residues: Phosphoribosylformylglycinamidine cyclo-ligase (346 aa).

It belongs to the AIR synthase family.

It localises to the cytoplasm. It catalyses the reaction 2-formamido-N(1)-(5-O-phospho-beta-D-ribosyl)acetamidine + ATP = 5-amino-1-(5-phospho-beta-D-ribosyl)imidazole + ADP + phosphate + H(+). The protein operates within purine metabolism; IMP biosynthesis via de novo pathway; 5-amino-1-(5-phospho-D-ribosyl)imidazole from N(2)-formyl-N(1)-(5-phospho-D-ribosyl)glycinamide: step 2/2. This Vibrio parahaemolyticus serotype O3:K6 (strain RIMD 2210633) protein is Phosphoribosylformylglycinamidine cyclo-ligase.